Here is a 634-residue protein sequence, read N- to C-terminus: DNA gyrase subunit B (634 aa).

Residues 1-220 form an ATPase domain region; that stretch reads MSYDASAIRV…EEVFLDKGGV (220 aa). Positions 221–390 are transducer domain; it reads ASFAKALAEG…EAARKARELV (170 aa). The Toprim domain occupies 416 to 534; it reads AELFIVEGDS…RGHVYIAQPP (119 aa). Residues Glu422, Asp499, and Asp501 each coordinate Mg(2+).

The protein belongs to the type II topoisomerase GyrB family. As to quaternary structure, heterotetramer, composed of two GyrA and two GyrB chains. Non-hydrolyzable ATP analogs induce dimerization, novobiocin also induces a small amount of dimerization. The two subunits form an intertwined dimer where the GyrB ATPase transducer helix of 1 subunit connects to the Toprim domain of the other GyrB subunit through a 10 residue linker. In the heterotetramer, GyrA contains the active site tyrosine that forms a covalent intermediate with the DNA, while GyrB binds cofactors and catalyzes ATP hydrolysis. It depends on Mg(2+) as a cofactor. Requires Mn(2+) as cofactor. Ca(2+) serves as cofactor.

The protein localises to the cytoplasm. The catalysed reaction is ATP-dependent breakage, passage and rejoining of double-stranded DNA.. Its function is as follows. A type II topoisomerase that negatively supercoils closed circular double-stranded (ds) DNA in an ATP-dependent manner. It probably also catalyzes the interconversion of other topological isomers of double-stranded DNA rings, including catenanes. Relaxes negatively supercoiled DNA in an ATP-independent manner. At comparable concentrations T.thermophilus gyrase does not introduce as many negative supercoils into DNA as the E.coli enzyme. Negative supercoiling favors strand separation, and DNA replication, transcription, recombination and repair, all of which involve strand separation. Type II topoisomerases break and join 2 DNA strands simultaneously in an ATP-dependent manner. This Thermus thermophilus (strain ATCC 27634 / DSM 579 / HB8) protein is DNA gyrase subunit B.